Here is a 150-residue protein sequence, read N- to C-terminus: D-aminoacyl-tRNA deacylase (150 aa).

The short motif at 138–139 is the Gly-cisPro motif, important for rejection of L-amino acids element; the sequence is GP.

It belongs to the DTD family. Homodimer.

The protein localises to the cytoplasm. The enzyme catalyses glycyl-tRNA(Ala) + H2O = tRNA(Ala) + glycine + H(+). It catalyses the reaction a D-aminoacyl-tRNA + H2O = a tRNA + a D-alpha-amino acid + H(+). In terms of biological role, an aminoacyl-tRNA editing enzyme that deacylates mischarged D-aminoacyl-tRNAs. Also deacylates mischarged glycyl-tRNA(Ala), protecting cells against glycine mischarging by AlaRS. Acts via tRNA-based rather than protein-based catalysis; rejects L-amino acids rather than detecting D-amino acids in the active site. By recycling D-aminoacyl-tRNA to D-amino acids and free tRNA molecules, this enzyme counteracts the toxicity associated with the formation of D-aminoacyl-tRNA entities in vivo and helps enforce protein L-homochirality. In Parabacteroides distasonis (strain ATCC 8503 / DSM 20701 / CIP 104284 / JCM 5825 / NCTC 11152), this protein is D-aminoacyl-tRNA deacylase.